The sequence spans 38 residues: Large ribosomal subunit protein bL36 (38 aa).

It belongs to the bacterial ribosomal protein bL36 family.

The sequence is that of Large ribosomal subunit protein bL36 from Sorangium cellulosum (strain So ce56) (Polyangium cellulosum (strain So ce56)).